We begin with the raw amino-acid sequence, 452 residues long: General transcription and DNA repair factor IIH subunit TFB2 (452 aa).

Belongs to the TFB2 family. Component of the 7-subunit TFIIH core complex composed of XPB, XPD, TFB1/GTF2H1, GTF2H2/P44, TFB4/GTF2H3, TFB2/GTF2H4 and TFB5/GTF2H5, which is active in NER. The core complex associates with the 3-subunit CDK-activating kinase (CAK) module composed of CYCH1/cyclin H1, CDKD and MAT1/At4g30820 to form the 10-subunit holoenzyme (holo-TFIIH) active in transcription.

Its subcellular location is the nucleus. Component of the general transcription and DNA repair factor IIH (TFIIH) core complex, which is involved in general and transcription-coupled nucleotide excision repair (NER) of damaged DNA and, when complexed to CAK, in RNA transcription by RNA polymerase II. In NER, TFIIH acts by opening DNA around the lesion to allow the excision of the damaged oligonucleotide and its replacement by a new DNA fragment. In transcription, TFIIH has an essential role in transcription initiation. When the pre-initiation complex (PIC) has been established, TFIIH is required for promoter opening and promoter escape. Phosphorylation of the C-terminal tail (CTD) of the largest subunit of RNA polymerase II by the kinase module CAK controls the initiation of transcription. The chain is General transcription and DNA repair factor IIH subunit TFB2 from Arabidopsis thaliana (Mouse-ear cress).